Consider the following 3001-residue polypeptide: BEACH domain-containing protein C2 (3001 aa).

Disordered regions lie at residues 43-80 (DFEQ…SSFG), 103-156 (DVQS…KATV), 1018-1076 (NVLA…NVGS), 1846-1868 (TFSS…PRDK), 2039-2071 (YSGT…SNPP), 2101-2132 (AEEH…RTSN), and 2193-2212 (NLAD…DRSW). Serine 48 is modified (phosphoserine). Composition is skewed to polar residues over residues 57 to 72 (NESQ…FSNS), 121 to 132 (SMQQSLSETSLD), and 1037 to 1050 (SPYN…QLDS). Residues 1854-1863 (LEPPNNNAPP) show a composition bias toward pro residues. Over residues 2101–2119 (AEEHKRDEGRISGSHEHAS) the composition is skewed to basic and acidic residues. The span at 2120–2129 (RTSAGNSDPR) shows a compositional bias: polar residues. Residues 2151–2260 (ELDERILLEL…GRRNAYRAIV (110 aa)) form the BEACH-type PH domain. Residues 2196–2211 (DHSDESQSGDQEKDRS) show a composition bias toward basic and acidic residues. The region spanning 2275 to 2564 (QRPEQLLRRT…QLLTVPHMKR (290 aa)) is the BEACH domain. WD repeat units follow at residues 2679–2718 (SGIR…TLET), 2721–2760 (GHCA…TSRT), 2802–2841 (GHRR…LIRR), 2842–2881 (LVGV…IAKA), and 2953–2992 (GQGQ…LKVV).

The sequence is that of BEACH domain-containing protein C2 from Arabidopsis thaliana (Mouse-ear cress).